The sequence spans 565 residues: Arginine--tRNA ligase (565 aa).

Residues 128–138 (ANPTGPLHVGH) carry the 'HIGH' region motif.

Belongs to the class-I aminoacyl-tRNA synthetase family. Monomer.

It is found in the cytoplasm. The enzyme catalyses tRNA(Arg) + L-arginine + ATP = L-arginyl-tRNA(Arg) + AMP + diphosphate. This is Arginine--tRNA ligase from Albidiferax ferrireducens (strain ATCC BAA-621 / DSM 15236 / T118) (Rhodoferax ferrireducens).